Consider the following 438-residue polypeptide: UDP-N-acetylmuramoylalanine--D-glutamate ligase (438 aa).

Position 112–118 (Gly112–Thr118) interacts with ATP.

Belongs to the MurCDEF family.

The protein resides in the cytoplasm. The enzyme catalyses UDP-N-acetyl-alpha-D-muramoyl-L-alanine + D-glutamate + ATP = UDP-N-acetyl-alpha-D-muramoyl-L-alanyl-D-glutamate + ADP + phosphate + H(+). The protein operates within cell wall biogenesis; peptidoglycan biosynthesis. Functionally, cell wall formation. Catalyzes the addition of glutamate to the nucleotide precursor UDP-N-acetylmuramoyl-L-alanine (UMA). In Yersinia pseudotuberculosis serotype I (strain IP32953), this protein is UDP-N-acetylmuramoylalanine--D-glutamate ligase.